Consider the following 400-residue polypeptide: CCA-adding enzyme (400 aa).

ATP is bound by residues Gly28 and Arg31. CTP contacts are provided by Gly28 and Arg31. Mg(2+) is bound by residues Asp41 and Asp43. Arg112, Asp155, Arg158, Arg161, and Arg164 together coordinate ATP. Residues Arg112, Asp155, Arg158, Arg161, and Arg164 each coordinate CTP.

Belongs to the tRNA nucleotidyltransferase/poly(A) polymerase family. Bacterial CCA-adding enzyme type 3 subfamily. In terms of assembly, homodimer. Mg(2+) is required as a cofactor.

The enzyme catalyses a tRNA precursor + 2 CTP + ATP = a tRNA with a 3' CCA end + 3 diphosphate. It carries out the reaction a tRNA with a 3' CCA end + 2 CTP + ATP = a tRNA with a 3' CCACCA end + 3 diphosphate. Catalyzes the addition and repair of the essential 3'-terminal CCA sequence in tRNAs without using a nucleic acid template. Adds these three nucleotides in the order of C, C, and A to the tRNA nucleotide-73, using CTP and ATP as substrates and producing inorganic pyrophosphate. tRNA 3'-terminal CCA addition is required both for tRNA processing and repair. Also involved in tRNA surveillance by mediating tandem CCA addition to generate a CCACCA at the 3' terminus of unstable tRNAs. While stable tRNAs receive only 3'-terminal CCA, unstable tRNAs are marked with CCACCA and rapidly degraded. This is CCA-adding enzyme from Staphylococcus aureus (strain MSSA476).